The chain runs to 297 residues: Acetyl-coenzyme A carboxylase carboxyl transferase subunit beta (297 aa).

The CoA carboxyltransferase N-terminal domain occupies 25–294; the sequence is LWVKCPETGQ…LPPKGRLPRP (270 aa).

Belongs to the AccD/PCCB family. Acetyl-CoA carboxylase is a heterohexamer composed of biotin carboxyl carrier protein (AccB), biotin carboxylase (AccC) and two subunits each of ACCase subunit alpha (AccA) and ACCase subunit beta (AccD).

Its subcellular location is the cytoplasm. It catalyses the reaction N(6)-carboxybiotinyl-L-lysyl-[protein] + acetyl-CoA = N(6)-biotinyl-L-lysyl-[protein] + malonyl-CoA. It participates in lipid metabolism; malonyl-CoA biosynthesis; malonyl-CoA from acetyl-CoA: step 1/1. Component of the acetyl coenzyme A carboxylase (ACC) complex. Biotin carboxylase (BC) catalyzes the carboxylation of biotin on its carrier protein (BCCP) and then the CO(2) group is transferred by the transcarboxylase to acetyl-CoA to form malonyl-CoA. In Xanthobacter autotrophicus (strain ATCC BAA-1158 / Py2), this protein is Acetyl-coenzyme A carboxylase carboxyl transferase subunit beta.